The following is a 263-amino-acid chain: Leukocyte-associated immunoglobulin-like receptor 1 (263 aa).

The N-terminal stretch at 1-21 (MPLHSVIVLVLVLCLGWKSNT) is a signal peptide. The 86-residue stretch at 27–112 (SDFTICAEPG…VWSQRSNDLQ (86 aa)) folds into the Ig-like C2-type domain. A disulfide bond links Cys-49 and Cys-96. The N-linked (GlcNAc...) asparagine glycan is linked to Asn-87. A helical membrane pass occupies residues 144–164 (ILTVVSVIFLLCLSLFLFCFL). 2 consecutive short sequence motifs (ITIM motif) follow at residues 225–230 (VTYAQL) and 255–260 (STYAAI). Tyr-227 and Tyr-257 each carry phosphotyrosine.

Interacts with SH2 domains of tyrosine-protein phosphatases PTPN6 and PTPN11. The interaction with PTPN6 is constitutive. Interacts with the SH2 domain of CSK. Binds with high affinity to extracellular matrix collagens, the interaction is functionally important. In terms of processing, phosphorylation at Tyr-227 and Tyr-257 activates it. May be phosphorylated by LCK. N-glycosylated. In terms of tissue distribution, expressed in lymphoid and non-lymphoid organs.

It localises to the membrane. Functions as an inhibitory receptor that plays a constitutive negative regulatory role on cytolytic function of natural killer (NK) cells, B-cells and T-cells. Activation by Tyr phosphorylation results in recruitment and activation of the phosphatases PTPN6 and PTPN11. It also reduces the increase of intracellular calcium evoked by B-cell receptor ligation. May also play its inhibitory role independently of SH2-containing phosphatases. Modulates cytokine production in CD4+ T-cells, down-regulating IL2 and IFNG production while inducing secretion of transforming growth factor beta. Also down-regulates IgG and IgE production in B-cells as well as IL8, IL10 and TNF secretion. Inhibits proliferation and induces apoptosis in myeloid leukemia cell lines as well as prevents nuclear translocation of NF-kappa-B p65 subunit/RELA and phosphorylation of I-kappa-B alpha/CHUK in these cells. Inhibits the differentiation of peripheral blood precursors towards dendritic cells. This chain is Leukocyte-associated immunoglobulin-like receptor 1 (Lair1), found in Rattus norvegicus (Rat).